The sequence spans 345 residues: Dihydroorotate dehydrogenase (quinone) (345 aa).

FMN-binding positions include 65 to 69 (AGLDK) and threonine 89. Lysine 69 provides a ligand contact to substrate. Position 114 to 118 (114 to 118 (NRMGF)) interacts with substrate. Residues asparagine 142 and asparagine 175 each coordinate FMN. Position 175 (asparagine 175) interacts with substrate. Serine 178 functions as the Nucleophile in the catalytic mechanism. Asparagine 180 lines the substrate pocket. Residues lysine 220 and threonine 248 each contribute to the FMN site. 249 to 250 (NT) is a binding site for substrate. FMN-binding positions include glycine 271, glycine 300, and 321 to 322 (YT).

Belongs to the dihydroorotate dehydrogenase family. Type 2 subfamily. Monomer. It depends on FMN as a cofactor.

It is found in the cell membrane. It carries out the reaction (S)-dihydroorotate + a quinone = orotate + a quinol. It participates in pyrimidine metabolism; UMP biosynthesis via de novo pathway; orotate from (S)-dihydroorotate (quinone route): step 1/1. Catalyzes the conversion of dihydroorotate to orotate with quinone as electron acceptor. In Burkholderia multivorans (strain ATCC 17616 / 249), this protein is Dihydroorotate dehydrogenase (quinone).